Reading from the N-terminus, the 120-residue chain is uncharacterized protein (120 aa).

It belongs to the asp23 family.

This is an uncharacterized protein from Bacillus subtilis (strain 168).